Reading from the N-terminus, the 948-residue chain is UvrABC system protein A (948 aa).

Residue G33–S40 coordinates ATP. The C4-type zinc finger occupies C252 to C279. 2 ABC transporter domains span residues W309–L587 and A607–K935. G639–S646 is a binding site for ATP. The C4-type zinc-finger motif lies at C738 to C764.

The protein belongs to the ABC transporter superfamily. UvrA family. As to quaternary structure, forms a heterotetramer with UvrB during the search for lesions.

It is found in the cytoplasm. Its function is as follows. The UvrABC repair system catalyzes the recognition and processing of DNA lesions. UvrA is an ATPase and a DNA-binding protein. A damage recognition complex composed of 2 UvrA and 2 UvrB subunits scans DNA for abnormalities. When the presence of a lesion has been verified by UvrB, the UvrA molecules dissociate. The polypeptide is UvrABC system protein A (Staphylococcus aureus (strain MSSA476)).